We begin with the raw amino-acid sequence, 440 residues long: Actin-like protein 7A (440 aa).

The interval 1–27 (MSLDAVWAPQTANIGDGPAKKASDQTS) is disordered. Residues 36 to 56 (ASLRDGPAKRAVWVRRDNAEK) are required for interaction with TES.

It belongs to the actin family. Interacts (via N-terminus) with TES (via LIM domain 2). Heterodimer with TES; the heterodimer interacts with ENAH to form a heterotrimer. Interacts with ACTL9. Interacts with CYLC1; the interaction may be relevant for proper acrosome attachment to the nuclear envelope. In terms of tissue distribution, detected in testis. Detected at the acrosome of round spermatids (at protein level).

It is found in the cytoplasm. The protein resides in the cytoskeleton. Its subcellular location is the golgi apparatus. It localises to the nucleus. In terms of biological role, essential for normal spermatogenesis and male fertility. Required for normal sperm head morphology, acroplaxome formation, acrosome attachment, and acrosome granule stability. May anchor and stabilize acrosomal adherence to the acroplaxome at least in part by facilitating the presence of F-actin in the subacrosomal space. May play an important role in formation and fusion of Golgi-derived vesicles during acrosome biogenesis. The sequence is that of Actin-like protein 7A (Actl7a) from Rattus norvegicus (Rat).